Here is a 552-residue protein sequence, read N- to C-terminus: Terpene synthase 5 (552 aa).

Residues Asp307, Asp311, and Glu457 each coordinate Mg(2+). The short motif at Asp307–Asp311 is the DDXXD motif element.

It belongs to the terpene synthase family. It depends on Mg(2+) as a cofactor.

Its function is as follows. Catalyzes the cyclization of farnesyl diphosphate to multiple sesquiterpenes, such as olefins and sesquiterpene alcohols. This is Terpene synthase 5 (TPS5) from Ricinus communis (Castor bean).